The chain runs to 189 residues: MLVVVSLTPPVGVCVGLFHHLLSLGGGITTCITSMETGITKWSGSLRCNSQMQKEKGERKGKEEERKRGKEEKIWFHSKKMKIHDYCIVLYCILFYFYFVLILFYFIALYFILHPFYSTILFFFPLFIKCSHLHTLTSFYSLLSSLFSSLIPKHSLHLAPLRKLNLSHFVSPLCAMFPHVGLRLLQTTQ.

The next 3 membrane-spanning stretches (helical) occupy residues 2-22 (LVVV…HHLL), 93-113 (ILFY…YFIL), and 116-136 (FYST…LHTL).

It localises to the membrane. This is an uncharacterized protein from Schizosaccharomyces pombe (strain 972 / ATCC 24843) (Fission yeast).